We begin with the raw amino-acid sequence, 79 residues long: Exodeoxyribonuclease 7 small subunit (79 aa).

It belongs to the XseB family. As to quaternary structure, heterooligomer composed of large and small subunits.

The protein resides in the cytoplasm. The catalysed reaction is Exonucleolytic cleavage in either 5'- to 3'- or 3'- to 5'-direction to yield nucleoside 5'-phosphates.. In terms of biological role, bidirectionally degrades single-stranded DNA into large acid-insoluble oligonucleotides, which are then degraded further into small acid-soluble oligonucleotides. This is Exodeoxyribonuclease 7 small subunit from Syntrophus aciditrophicus (strain SB).